A 196-amino-acid polypeptide reads, in one-letter code: Superantigen-like protein 11 (196 aa).

The sialyl Lewis X-binding stretch occupies residues 65–167; sequence LDVFVVREGS…RVTMKNGDFY (103 aa).

It belongs to the staphylococcal/streptococcal toxin family. In terms of assembly, homodimer (via its C-terminal domain). Interacts with host FCAR and SELPLG (via sialyl Lewis X).

The protein localises to the secreted. In terms of biological role, secreted protein that plays a role in the inhibition of host immune system. Targets myeloid cells such as monocytes or granulocytes through binding with sialyllactosamine-containing glycoproteins. Prevents initial rolling of neutrophils toward the site of infection by interacting with host SELPLG. Disrupts neutrophil motility by induction of cell adhesion via interacting with glycans but independently of SELPLG. In Staphylococcus aureus, this protein is Superantigen-like protein 11.